Here is a 366-residue protein sequence, read N- to C-terminus: tRNA/tmRNA (uracil-C(5))-methyltransferase (366 aa).

Gln190, Tyr218, Asn223, Glu239, and Asp299 together coordinate S-adenosyl-L-methionine. Residue Cys324 is the Nucleophile of the active site. Glu358 (proton acceptor) is an active-site residue.

The protein belongs to the class I-like SAM-binding methyltransferase superfamily. RNA M5U methyltransferase family. TrmA subfamily.

It carries out the reaction uridine(54) in tRNA + S-adenosyl-L-methionine = 5-methyluridine(54) in tRNA + S-adenosyl-L-homocysteine + H(+). It catalyses the reaction uridine(341) in tmRNA + S-adenosyl-L-methionine = 5-methyluridine(341) in tmRNA + S-adenosyl-L-homocysteine + H(+). Its function is as follows. Dual-specificity methyltransferase that catalyzes the formation of 5-methyluridine at position 54 (m5U54) in all tRNAs, and that of position 341 (m5U341) in tmRNA (transfer-mRNA). This is tRNA/tmRNA (uracil-C(5))-methyltransferase from Escherichia coli O7:K1 (strain IAI39 / ExPEC).